Consider the following 386-residue polypeptide: Succinate--CoA ligase [ADP-forming] subunit beta (386 aa).

Residues 9 to 244 enclose the ATP-grasp domain; the sequence is KELLRSYGVP…ETEEDPREVE (236 aa). ATP is bound by residues Lys46, 53–55, Glu99, Cys102, and Glu107; that span reads GRG. Positions 199 and 213 each coordinate Mg(2+). Residues Asn264 and 321 to 323 contribute to the substrate site; that span reads GIM.

The protein belongs to the succinate/malate CoA ligase beta subunit family. As to quaternary structure, heterotetramer of two alpha and two beta subunits. Mg(2+) serves as cofactor.

It catalyses the reaction succinate + ATP + CoA = succinyl-CoA + ADP + phosphate. The enzyme catalyses GTP + succinate + CoA = succinyl-CoA + GDP + phosphate. It participates in carbohydrate metabolism; tricarboxylic acid cycle; succinate from succinyl-CoA (ligase route): step 1/1. In terms of biological role, succinyl-CoA synthetase functions in the citric acid cycle (TCA), coupling the hydrolysis of succinyl-CoA to the synthesis of either ATP or GTP and thus represents the only step of substrate-level phosphorylation in the TCA. The beta subunit provides nucleotide specificity of the enzyme and binds the substrate succinate, while the binding sites for coenzyme A and phosphate are found in the alpha subunit. This is Succinate--CoA ligase [ADP-forming] subunit beta from Exiguobacterium sibiricum (strain DSM 17290 / CCUG 55495 / CIP 109462 / JCM 13490 / 255-15).